Here is a 271-residue protein sequence, read N- to C-terminus: Phosphatidylinositol transfer protein beta isoform (271 aa).

At lysine 215 the chain carries N6-acetyllysine. Serine 262 is modified (phosphoserine).

The protein belongs to the PtdIns transfer protein family. PI transfer class I subfamily. In terms of processing, constitutive phosphorylation of Ser-262 has no effect on phospholipid transfer activity but is required for Golgi targeting. In terms of tissue distribution, widely expressed in various tissues including brain.

Its subcellular location is the golgi apparatus. The protein resides in the golgi apparatus membrane. It localises to the endoplasmic reticulum membrane. It catalyses the reaction a 1,2-diacyl-sn-glycero-3-phosphocholine(in) = a 1,2-diacyl-sn-glycero-3-phosphocholine(out). It carries out the reaction a 1,2-diacyl-sn-glycero-3-phospho-(1D-myo-inositol)(in) = a 1,2-diacyl-sn-glycero-3-phospho-(1D-myo-inositol)(out). The enzyme catalyses an N-(acyl)-sphingosylphosphocholine(in) = an N-(acyl)-sphingosylphosphocholine(out). Phosphatidylinositol transfer activity is inhibited by N-ethylmaleimide. Functionally, catalyzes the transfer of phosphatidylinositol and phosphatidylcholine between membranes. Also catalyzes the transfer of sphingomyelin. Required for COPI-mediated retrograde transport from the Golgi to the endoplasmic reticulum; phosphatidylinositol and phosphatidylcholine transfer activity is essential for this function. This chain is Phosphatidylinositol transfer protein beta isoform (PITPNB), found in Homo sapiens (Human).